The primary structure comprises 178 residues: Large ribosomal subunit protein uL6 (178 aa).

The protein belongs to the universal ribosomal protein uL6 family. In terms of assembly, part of the 50S ribosomal subunit.

Its function is as follows. This protein binds to the 23S rRNA, and is important in its secondary structure. It is located near the subunit interface in the base of the L7/L12 stalk, and near the tRNA binding site of the peptidyltransferase center. In Ligilactobacillus salivarius (strain UCC118) (Lactobacillus salivarius), this protein is Large ribosomal subunit protein uL6.